The sequence spans 158 residues: Protein-export protein SecB (158 aa).

It belongs to the SecB family. Homotetramer, a dimer of dimers. One homotetramer interacts with 1 SecA dimer.

Its subcellular location is the cytoplasm. Functionally, one of the proteins required for the normal export of preproteins out of the cell cytoplasm. It is a molecular chaperone that binds to a subset of precursor proteins, maintaining them in a translocation-competent state. It also specifically binds to its receptor SecA. This chain is Protein-export protein SecB, found in Bartonella quintana (strain Toulouse) (Rochalimaea quintana).